A 1813-amino-acid polypeptide reads, in one-letter code: U3 small nucleolar RNA-associated protein 10 (1813 aa).

HEAT repeat units follow at residues 245 to 283, 389 to 427, 428 to 464, 584 to 621, and 659 to 695; these read DVLI…KASL, SETI…LQFN, ESDT…DIMP, ADMQ…LASK, and IIHH…QDDS. 2 disordered regions span residues 686–705 and 887–912; these read IRGP…STGV and DLGS…SSMD. Residues 690 to 705 are compositionally biased toward basic and acidic residues; it reads RSQDDSDRTRSESTGV. HEAT repeat units follow at residues 1058 to 1095, 1189 to 1228, 1265 to 1302, 1309 to 1347, 1398 to 1437, 1678 to 1715, and 1769 to 1806; these read QTID…AFEH, KIAV…KAHG, LSLV…SSND, ARVL…KYGK, EALP…HVPW, LASI…LAVA, and ALLP…ILGE.

This sequence belongs to the HEATR1/UTP10 family. In terms of assembly, component of the ribosomal small subunit (SSU) processome.

The protein localises to the nucleus. It localises to the nucleolus. Functionally, involved in nucleolar processing of pre-18S ribosomal RNA. Involved in ribosome biosynthesis. This chain is U3 small nucleolar RNA-associated protein 10, found in Coccidioides immitis (strain RS) (Valley fever fungus).